The following is a 459-amino-acid chain: Zinc finger protein ZPR1 (459 aa).

Residues 1–29 are compositionally biased toward low complexity; that stretch reads MSAGGAVEPGLPAAAAAPSAAPARDPGPG. The disordered stretch occupies residues 1 to 43; it reads MSAGGAVEPGLPAAAAAPSAAPARDPGPGHLFRPISAEDEEQQ. C4-type zinc fingers lie at residues 51 to 83 and 259 to 291; these read CMNCYRNGMTRLLLTKIPFFREIIVSSFSCEHC and CPECNAPAQTNMKLVQIPHFKEVIIMATNCENC. Positions 438–459 are disordered; the sequence is NEELGLNDMKTEGYETGLPAQR.

It belongs to the ZPR1 family. Component of an import snRNP complex composed of KPNB1, SNUPN, SMN1 and ZNF259. Interacts (via C-terminal region) with SMN1 (via C-terminal region); the interaction occurs after treatment with serum. Interacts with elongation factor 1-alpha EEF1A1; the interaction occurs in a epidermal growth factor (EGF)-dependent manner. Interacts (via zinc fingers) with EGFR (via C-terminal cytoplasmic kinase domain); the interaction is negatively regulated in response to epidermal growth factor (EGF) stimulation and EGFR kinase activity. May also bind to the PDGFR receptor.

It localises to the nucleus. The protein resides in the cytoplasm. The protein localises to the nucleolus. Its subcellular location is the perinuclear region. It is found in the gem. It localises to the cajal body. The protein resides in the cell projection. The protein localises to the axon. Its subcellular location is the growth cone. Its function is as follows. Acts as a signaling molecule that communicates proliferative growth signals from the cytoplasm to the nucleus. Plays a role for the localization and accumulation of the survival motor neuron protein SMN1 in sub-nuclear bodies, including gems and Cajal bodies. Induces neuron differentiation and stimulates axonal growth and formation of growth cone in spinal cord motor neurons. Plays a role in the splicing of cellular pre-mRNAs. May be involved in H(2)O(2)-induced neuronal cell death. The polypeptide is Zinc finger protein ZPR1 (ZNF259) (Bos taurus (Bovine)).